The primary structure comprises 152 residues: Ribosome maturation factor RimP (152 aa).

Belongs to the RimP family.

It localises to the cytoplasm. Required for maturation of 30S ribosomal subunits. This is Ribosome maturation factor RimP from Burkholderia lata (strain ATCC 17760 / DSM 23089 / LMG 22485 / NCIMB 9086 / R18194 / 383).